Consider the following 532-residue polypeptide: E3 ubiquitin-protein ligase MGRN1 (532 aa).

Gly2 carries the N-myristoyl glycine lipid modification. Residues 277–316 (ECVVCLSDLRDTLILPCRHLCLCTSCADTLRYQANNCPIC) form an RING-type zinc finger. Positions 384–387 (PSAP) match the Required for TSG101-binding motif. Phosphotyrosine is present on Tyr389. The tract at residues 419–518 (LQKGKTQSKS…QPVPPADIYL (100 aa)) is disordered. The span at 422–435 (GKTQSKSPDSTLRS) shows a compositional bias: polar residues. 4 positions are modified to phosphoserine: Ser428, Ser449, Ser452, and Ser501. A compositionally biased stretch (acidic residues) spans 442-453 (EEDEEKLSEDSD).

Interacts with MC1R and MC4R. Interacts with TSG101. Interacts with mislocalized cytosolically exposed PRNP; this interaction alters MGRN1 subcellular location and causes lysosomal enlargement. Post-translationally, autoubiquitinated in vitro. In terms of tissue distribution, widely expressed, with highest levels in brain, heart, kidney and liver. In the CNS, especially prominent in the Purkinje cells of the cerebellum. In the skin, expressed in the basal layer of the epidermis and hair follicles, primarily in the outer root sheath. Isoforms 1, 3, 4 and 5 are equally expressed in the liver. Isoforms 1, 3 and 4 are most abundant in brain, kidney and heart, respectively.

The protein resides in the early endosome. It localises to the cytoplasm. The protein localises to the cell membrane. Its subcellular location is the nucleus. The catalysed reaction is S-ubiquitinyl-[E2 ubiquitin-conjugating enzyme]-L-cysteine + [acceptor protein]-L-lysine = [E2 ubiquitin-conjugating enzyme]-L-cysteine + N(6)-ubiquitinyl-[acceptor protein]-L-lysine.. The protein operates within protein modification; protein ubiquitination. In terms of biological role, E3 ubiquitin-protein ligase. Mediates TSG101 monoubiquitination at multiple sites. Plays a role in the regulation of endosome-to-lysosome trafficking. Impairs MC1R- and MC4R-signaling by competing with GNAS-binding to MCRs and inhibiting agonist-induced cAMP production. Does not inhibit ADRB2-signaling. Does not promote MC1R ubiquitination. Also acts as a negative regulator of hedgehog signaling. The polypeptide is E3 ubiquitin-protein ligase MGRN1 (Mgrn1) (Mus musculus (Mouse)).